A 157-amino-acid polypeptide reads, in one-letter code: Xanthine-guanine phosphoribosyltransferase (157 aa).

5-phospho-alpha-D-ribose 1-diphosphate contacts are provided by residues 42–43 (RG) and 93–101 (DDLVDTGNT). Asp94 contributes to the Mg(2+) binding site. Positions 97 and 140 each coordinate guanine. Xanthine contacts are provided by Asp97 and Ile140. GMP-binding positions include 97–101 (DTGNT) and 139–140 (WI).

The protein belongs to the purine/pyrimidine phosphoribosyltransferase family. XGPT subfamily. In terms of assembly, homotetramer. Mg(2+) serves as cofactor.

It localises to the cell inner membrane. The enzyme catalyses GMP + diphosphate = guanine + 5-phospho-alpha-D-ribose 1-diphosphate. The catalysed reaction is XMP + diphosphate = xanthine + 5-phospho-alpha-D-ribose 1-diphosphate. It carries out the reaction IMP + diphosphate = hypoxanthine + 5-phospho-alpha-D-ribose 1-diphosphate. Its pathway is purine metabolism; GMP biosynthesis via salvage pathway; GMP from guanine: step 1/1. It participates in purine metabolism; XMP biosynthesis via salvage pathway; XMP from xanthine: step 1/1. Functionally, purine salvage pathway enzyme that catalyzes the transfer of the ribosyl-5-phosphate group from 5-phospho-alpha-D-ribose 1-diphosphate (PRPP) to the N9 position of the 6-oxopurines guanine and xanthine to form the corresponding ribonucleotides GMP (guanosine 5'-monophosphate) and XMP (xanthosine 5'-monophosphate), with the release of PPi. To a lesser extent, also acts on hypoxanthine. This Actinobacillus pleuropneumoniae serotype 5b (strain L20) protein is Xanthine-guanine phosphoribosyltransferase.